A 458-amino-acid chain; its full sequence is 5'-adenylylsulfate reductase 3, chloroplastic (458 aa).

The tract at residues 1 to 24 (MALAINVSSSSSSAISSSSFPSSD) is disordered. A chloroplast-targeting transit peptide spans 1-69 (MALAINVSSS…VQSITKESIV (69 aa)). Low complexity predominate over residues 8 to 23 (SSSSSSAISSSSFPSS). A reductase domain region spans residues 70–319 (ASEVTEKLDV…KAKECGLHKG (250 aa)). A Thioredoxin domain is found at 337–458 (ASVADIFNSE…SLTSFLNLVR (122 aa)). Catalysis depends on nucleophile residues Cys-378 and Cys-381. Cys-378 and Cys-381 form a disulfide bridge.

Belongs to the APS reductase family. [4Fe-4S] cluster serves as cofactor. Leaves, roots and stem.

It is found in the plastid. The protein resides in the chloroplast. The enzyme catalyses glutathione disulfide + sulfite + AMP + 2 H(+) = adenosine 5'-phosphosulfate + 2 glutathione. Stimulated by sodium sulfate &gt; ammonium sulfate. Functionally, reduces sulfate for Cys biosynthesis. Substrate preference is adenosine-5'-phosphosulfate (APS) &gt;&gt; 3'-phosphoadenosine-5'-phosphosulfate (PAPS). Uses glutathione or DTT as source of protons. This chain is 5'-adenylylsulfate reductase 3, chloroplastic (APR3), found in Arabidopsis thaliana (Mouse-ear cress).